The chain runs to 87 residues: Toxin ICK-41 (87 aa).

Positions 1–19 (MKPIVYMLLFCAFTVVILG) are cleaved as a signal peptide. Disulfide bonds link cysteine 40–cysteine 54, cysteine 40–cysteine 77, cysteine 53–cysteine 66, and cysteine 80–cysteine 87.

The protein belongs to the neurotoxin 27 (Jztx-72) family. ICK-41 subfamily. In terms of tissue distribution, expressed by the venom gland.

The protein localises to the secreted. In terms of biological role, probable neurotoxin with ion channel impairing activity. In Trittame loki (Brush-footed trapdoor spider), this protein is Toxin ICK-41.